A 40-amino-acid chain; its full sequence is Meleagrin (40 aa).

Position 1 is a pyrrolidone carboxylic acid (Gln1). 3 disulfides stabilise this stretch: Cys6–Cys33, Cys12–Cys28, and Cys16–Cys32.

This sequence belongs to the transferrin family.

This Meleagris gallopavo (Wild turkey) protein is Meleagrin.